The primary structure comprises 328 residues: MLPEQSAFGRSAMPGSDAVNPGPSPFAPPPNSFSGDFLGLSLPDEEHLWGMSPLSSSMPSWNGKNEQMFSNPNLERDLKHSHVRNGQPTPPPYGDNKTHTVGDLYSLSQCQFSNGAQNFQTHNDRRSFCEQSAINSNGGSSKRRKVRDAKMTQAEYNEQQQEKAKREKFLERNRLAASKCRQKKKEHTQLLESRYREQSDKKEQLVSEIARLRSEILGLKNEVLKHAQCGDEPIKLHLAQMVKKITYNDTTAPDLTDVPDAASSSEGPMTPRPQQALSFGFDDPLHLEPSRADGSTDHSVRRDSEASVLTENSYAFSTDESFDDLINV.

The tract at residues Met1 to Gly39 is disordered. Positions Gly22 to Asn31 are enriched in pro residues. A basic motif region spans residues Lys163–Lys202. One can recognise a bZIP domain in the interval Lys163–His226. Residues Leu205–Leu219 are leucine-zipper. The disordered stretch occupies residues Thr250 to Ser313. Polar residues predominate over residues Ala262–Leu277. Over residues Asp283 to Glu305 the composition is skewed to basic and acidic residues.

The protein belongs to the bZIP family. ATF subfamily.

It is found in the nucleus. Functionally, transcription factor that acts as a key player in the regulatory circuit that integrates secondary metabolism and cellular response to oxidative stress. Regulates the genes involved in development, as well as osmotic, oxidative, and cell wall stresses. Participates in the caspofungin paradoxical effect (CPE), where fungi grow beyond the minimum inhibitory concentration of caspofungin. Plays a role in virulence. The sequence is that of Basic leucine zipper (bZIP) transcription factor atfB from Aspergillus fumigatus (strain ATCC MYA-4609 / CBS 101355 / FGSC A1100 / Af293) (Neosartorya fumigata).